We begin with the raw amino-acid sequence, 109 residues long: Parvalbumin alpha (109 aa).

S1 is modified (N-acetylserine). 2 EF-hand domains span residues K38–G73 and L77–T109. Ca(2+)-binding residues include D51, D53, S55, Y57, E59, E62, D90, D92, D94, K96, and E101.

This sequence belongs to the parvalbumin family. In terms of assembly, monomer.

In muscle, parvalbumin is thought to be involved in relaxation after contraction. It binds two calcium ions. In Raja clavata (Thornback ray), this protein is Parvalbumin alpha.